Consider the following 257-residue polypeptide: 3-deoxy-manno-octulosonate cytidylyltransferase (257 aa).

It belongs to the KdsB family.

The protein localises to the cytoplasm. The enzyme catalyses 3-deoxy-alpha-D-manno-oct-2-ulosonate + CTP = CMP-3-deoxy-beta-D-manno-octulosonate + diphosphate. It functions in the pathway nucleotide-sugar biosynthesis; CMP-3-deoxy-D-manno-octulosonate biosynthesis; CMP-3-deoxy-D-manno-octulosonate from 3-deoxy-D-manno-octulosonate and CTP: step 1/1. The protein operates within bacterial outer membrane biogenesis; lipopolysaccharide biosynthesis. Its function is as follows. Activates KDO (a required 8-carbon sugar) for incorporation into bacterial lipopolysaccharide in Gram-negative bacteria. This is 3-deoxy-manno-octulosonate cytidylyltransferase from Stenotrophomonas maltophilia (strain R551-3).